A 156-amino-acid chain; its full sequence is Ribosomal RNA large subunit methyltransferase H (156 aa).

S-adenosyl-L-methionine-binding positions include Leu73, Gly104, and 123–128 (LSALTL).

The protein belongs to the RNA methyltransferase RlmH family. In terms of assembly, homodimer.

The protein resides in the cytoplasm. It carries out the reaction pseudouridine(1915) in 23S rRNA + S-adenosyl-L-methionine = N(3)-methylpseudouridine(1915) in 23S rRNA + S-adenosyl-L-homocysteine + H(+). Specifically methylates the pseudouridine at position 1915 (m3Psi1915) in 23S rRNA. This chain is Ribosomal RNA large subunit methyltransferase H, found in Shewanella oneidensis (strain ATCC 700550 / JCM 31522 / CIP 106686 / LMG 19005 / NCIMB 14063 / MR-1).